The primary structure comprises 941 residues: Translation initiation factor IF-2 (941 aa).

The segment covering aspartate 170 to lysine 209 has biased composition (basic and acidic residues). 2 disordered regions span residues aspartate 170–alanine 228 and arginine 252–glutamine 351. Residues alanine 256–glutamate 269 are compositionally biased toward low complexity. Residues threonine 271–serine 297 are compositionally biased toward basic and acidic residues. The segment covering lysine 299 to glutamine 308 has biased composition (polar residues). In terms of domain architecture, tr-type G spans proline 441–lysine 610. The tract at residues glycine 450–threonine 457 is G1. Residue glycine 450–threonine 457 participates in GTP binding. Positions glycine 475–histidine 479 are G2. The segment at aspartate 496–glycine 499 is G3. Residues aspartate 496–histidine 500 and asparagine 550–aspartate 553 contribute to the GTP site. A G4 region spans residues asparagine 550–aspartate 553. The segment at serine 586 to lysine 588 is G5.

This sequence belongs to the TRAFAC class translation factor GTPase superfamily. Classic translation factor GTPase family. IF-2 subfamily.

Its subcellular location is the cytoplasm. One of the essential components for the initiation of protein synthesis. Protects formylmethionyl-tRNA from spontaneous hydrolysis and promotes its binding to the 30S ribosomal subunits. Also involved in the hydrolysis of GTP during the formation of the 70S ribosomal complex. This chain is Translation initiation factor IF-2, found in Herminiimonas arsenicoxydans.